The chain runs to 1241 residues: DNA-directed RNA polymerase subunit beta (1241 aa).

The interval 1195 to 1219 (PQDVQENVSGENVDAGYENEDVDID) is disordered.

Belongs to the RNA polymerase beta chain family. As to quaternary structure, the RNAP catalytic core consists of 2 alpha, 1 beta, 1 beta' and 1 omega subunit. When a sigma factor is associated with the core the holoenzyme is formed, which can initiate transcription.

The catalysed reaction is RNA(n) + a ribonucleoside 5'-triphosphate = RNA(n+1) + diphosphate. Its function is as follows. DNA-dependent RNA polymerase catalyzes the transcription of DNA into RNA using the four ribonucleoside triphosphates as substrates. This Clostridium acetobutylicum (strain ATCC 824 / DSM 792 / JCM 1419 / IAM 19013 / LMG 5710 / NBRC 13948 / NRRL B-527 / VKM B-1787 / 2291 / W) protein is DNA-directed RNA polymerase subunit beta.